A 579-amino-acid polypeptide reads, in one-letter code: Deleted in azoospermia protein 4 (579 aa).

A compositionally biased stretch (polar residues) spans 1 to 10 (MSAANPETPN). Residues 1 to 27 (MSAANPETPNSTISREASTQSSSAAAS) are disordered. Residues 11–27 (STISREASTQSSSAAAS) are compositionally biased toward low complexity. One can recognise an RRM 1 domain in the interval 40 to 115 (NTVFVGGIDA…KKLKLGPAIR (76 aa)). Over residues 163-175 (QHVQSAANPETPN) the composition is skewed to polar residues. The tract at residues 163–192 (QHVQSAANPETPNSTISREASTQSSSAAAS) is disordered. Residues 176–192 (STISREASTQSSSAAAS) show a composition bias toward low complexity. An RRM 2 domain is found at 205–280 (NTVFVGGIDA…KKLKLGPAIR (76 aa)). 9 consecutive DAZ domains span residues 332 to 355 (AYSAYPHSPGQVITGCQLLVYNYQ), 356 to 379 (EYPTYPDSAFQVTTGYQLPVYNYQ), 380 to 403 (PFPAYPRSPFQVTAGYQLPVYNYQ), 404 to 427 (AFPAYPNSPFQVATGYQFPVYNYQ), 428 to 451 (PFPAYPSSPFQVTAGYQLPVYNYQ), 452 to 475 (AFPAYPNSPFQVATGYQFPVYNYQ), 476 to 499 (AFPAYPNSPVQVTTGYQLPVYNYQ), 500 to 523 (AFPAYPSSPFQVTTGYQLPVYNYQ), and 524 to 547 (AFPAYPNSAVQVTTGYQFHVYNYQ).

This sequence belongs to the RRM DAZ family. In terms of assembly, forms a heterodimer with BOLL and DAZL. Interacts with PUM2, DAZAP1, DAZAP2, DZIP1 and DZIP3. Testis-specific. Expression restricted to premeiotic germ cells, particularly in spermatogonia (at protein level).

The protein localises to the cytoplasm. The protein resides in the nucleus. Its function is as follows. RNA-binding protein that plays an essential role in spermatogenesis. May act by binding to the 3'-UTR of mRNAs and regulating their translation. This chain is Deleted in azoospermia protein 4 (DAZ4), found in Homo sapiens (Human).